We begin with the raw amino-acid sequence, 232 residues long: Ribosomal RNA large subunit methyltransferase E (232 aa).

S-adenosyl-L-methionine is bound by residues glycine 64, tryptophan 66, aspartate 97, aspartate 113, and aspartate 138. Lysine 178 serves as the catalytic Proton acceptor.

Belongs to the class I-like SAM-binding methyltransferase superfamily. RNA methyltransferase RlmE family.

It localises to the cytoplasm. The enzyme catalyses uridine(2552) in 23S rRNA + S-adenosyl-L-methionine = 2'-O-methyluridine(2552) in 23S rRNA + S-adenosyl-L-homocysteine + H(+). Its function is as follows. Specifically methylates the uridine in position 2552 of 23S rRNA at the 2'-O position of the ribose in the fully assembled 50S ribosomal subunit. The polypeptide is Ribosomal RNA large subunit methyltransferase E (Leptothrix cholodnii (strain ATCC 51168 / LMG 8142 / SP-6) (Leptothrix discophora (strain SP-6))).